Consider the following 448-residue polypeptide: Adenylosuccinate synthetase (448 aa).

GTP contacts are provided by residues glycine 36–lysine 42 and glycine 64–threonine 66. The active-site Proton acceptor is the aspartate 37. Mg(2+) contacts are provided by aspartate 37 and glycine 64. Residues aspartate 37–lysine 40, asparagine 62–histidine 65, threonine 154, arginine 168, asparagine 246, threonine 261, and arginine 325 contribute to the IMP site. Histidine 65 functions as the Proton donor in the catalytic mechanism. Substrate is bound at residue valine 321 to arginine 327. Residues arginine 327, lysine 353–aspartate 355, and glycine 436–glycine 438 each bind GTP.

This sequence belongs to the adenylosuccinate synthetase family. As to quaternary structure, homodimer. Mg(2+) serves as cofactor.

It localises to the cytoplasm. It catalyses the reaction IMP + L-aspartate + GTP = N(6)-(1,2-dicarboxyethyl)-AMP + GDP + phosphate + 2 H(+). It participates in purine metabolism; AMP biosynthesis via de novo pathway; AMP from IMP: step 1/2. In terms of biological role, plays an important role in the de novo pathway and in the salvage pathway of purine nucleotide biosynthesis. Catalyzes the first committed step in the biosynthesis of AMP from IMP. The polypeptide is Adenylosuccinate synthetase (Drosophila persimilis (Fruit fly)).